Consider the following 362-residue polypeptide: Serpentine receptor class epsilon-37 (362 aa).

The next 7 membrane-spanning stretches (helical) occupy residues 29 to 49, 67 to 87, 127 to 147, 170 to 190, 204 to 224, 260 to 280, and 288 to 308; these read IFYVFAIFQTSIYILTGYILV, IMMCWFLCQWFQAFLAKIVLI, IYFASYFLWHYMYSILFAVLA, IPILLIAATNLITLPYAYQTT, IFIGSVAVFGYIMLWRVNLAW, LVVSASVFILVVTILLAVLLF, and FFVHALDNSMLLPALVMSLTL.

It belongs to the nematode receptor-like protein sre family.

Its subcellular location is the membrane. The protein is Serpentine receptor class epsilon-37 (sre-37) of Caenorhabditis elegans.